The chain runs to 441 residues: Proline--tRNA ligase (441 aa).

Belongs to the class-II aminoacyl-tRNA synthetase family. ProS type 2 subfamily. Homodimer.

Its subcellular location is the cytoplasm. The catalysed reaction is tRNA(Pro) + L-proline + ATP = L-prolyl-tRNA(Pro) + AMP + diphosphate. Catalyzes the attachment of proline to tRNA(Pro) in a two-step reaction: proline is first activated by ATP to form Pro-AMP and then transferred to the acceptor end of tRNA(Pro). This chain is Proline--tRNA ligase, found in Bartonella henselae (strain ATCC 49882 / DSM 28221 / CCUG 30454 / Houston 1) (Rochalimaea henselae).